A 993-amino-acid polypeptide reads, in one-letter code: uncharacterized protein (993 aa).

The N-terminal stretch at 1-24 (MLLFKFNFTTAFLFTILAFAQARS) is a signal peptide. Residues asparagine 7, asparagine 44, asparagine 89, asparagine 121, asparagine 138, asparagine 161, asparagine 169, asparagine 232, asparagine 361, asparagine 386, asparagine 393, asparagine 423, asparagine 447, asparagine 480, and asparagine 488 are each glycosylated (N-linked (GlcNAc...) asparagine). Glutamate 504 is an active-site residue. 3 N-linked (GlcNAc...) asparagine glycosylation sites follow: asparagine 545, asparagine 548, and asparagine 614. Aspartate 672 acts as the Proton donor in catalysis. Residues asparagine 673, asparagine 814, asparagine 826, asparagine 835, asparagine 846, asparagine 910, asparagine 940, and asparagine 987 are each glycosylated (N-linked (GlcNAc...) asparagine).

The protein belongs to the glycosyl hydrolase 31 family.

This is an uncharacterized protein from Schizosaccharomyces pombe (strain 972 / ATCC 24843) (Fission yeast).